A 1337-amino-acid chain; its full sequence is DNA-directed RNA polymerase subunit beta' (1337 aa).

Residues cysteine 60, cysteine 62, cysteine 75, and cysteine 78 each contribute to the Zn(2+) site. Aspartate 536, aspartate 538, and aspartate 540 together coordinate Mg(2+). 4 residues coordinate Zn(2+): cysteine 895, cysteine 974, cysteine 981, and cysteine 984.

It belongs to the RNA polymerase beta' chain family. The RNAP catalytic core consists of 2 alpha, 1 beta, 1 beta' and 1 omega subunit. When a sigma factor is associated with the core the holoenzyme is formed, which can initiate transcription. It depends on Mg(2+) as a cofactor. Zn(2+) is required as a cofactor.

It carries out the reaction RNA(n) + a ribonucleoside 5'-triphosphate = RNA(n+1) + diphosphate. DNA-dependent RNA polymerase catalyzes the transcription of DNA into RNA using the four ribonucleoside triphosphates as substrates. This is DNA-directed RNA polymerase subunit beta' from Bifidobacterium adolescentis (strain ATCC 15703 / DSM 20083 / NCTC 11814 / E194a).